A 297-amino-acid polypeptide reads, in one-letter code: Adrenocorticotropic hormone receptor (297 aa).

The Extracellular portion of the chain corresponds to 1–23 (MKHIITPYEHTNDTARNNSDCPD). 2 N-linked (GlcNAc...) asparagine glycosylation sites follow: N12 and N17. Intrachain disulfides connect C21–C253 and C245–C251. A helical membrane pass occupies residues 24-49 (VVLPEEIFFTISIIGVLENLIVLLAV). Residues 50-58 (VKNKNLQCP) are Cytoplasmic-facing. A helical transmembrane segment spans residues 59 to 79 (MYFFICSLAISDMLGSLYKIL). Over 80–104 (ENILIMFRNRGYLQPRGNFESTADD) the chain is Extracellular. Residues 105-126 (IIDCMFILSLLGSIFSLSVIAA) form a helical membrane-spanning segment. The Cytoplasmic portion of the chain corresponds to 127-147 (DRYITIFHALQYHSIVTMRRT). The chain crosses the membrane as a helical span at residues 148 to 168 (IITLTVIWIFCTGSGIAMVIF). Over 169–180 (SHHVPTVLTFTS) the chain is Extracellular. A helical membrane pass occupies residues 181–199 (LFPLMLVFILCLYIHMFLL). At 200–217 (ARSHARKISTLPRANMKG) the chain is on the cytoplasmic side. A helical membrane pass occupies residues 218–244 (AITLTILLGVFIFCWAPFILHVLLMTF). The Extracellular segment spans residues 245–256 (CPNNPYCVCYMS). Residues 257–278 (LFQINGMLIMCNAVIDPFIYAF) traverse the membrane as a helical segment. Residues 279 to 297 (RSPELRDAFKKMFSCHRYQ) lie on the Cytoplasmic side of the membrane. C293 carries S-palmitoyl cysteine lipidation.

This sequence belongs to the G-protein coupled receptor 1 family. Homodimer. Interacts with corticotropin (ACTH). Interacts with MRAP; this interaction targets MC2R to the plasma membrane. Interacts with MRAP2; competing with MRAP for binding to MC2R and impairing the binding of corticotropin (ACTH). In terms of processing, ubiquitinated by MGRN1 that may be involved in post-endocytic trafficking and/or degradation of internalized receptor.

The protein localises to the cell membrane. Its function is as follows. Hormone receptor primarily expressed in adrenal cortex that plays a key role in regulating adrenocortical function. Upon corticotropin (ACTH) binding, facilitates the release of adrenal glucocorticoids, including cortisol and corticosterone. In addition, MC2R is required for fetal and neonatal adrenal gland development. Mechanistically, activates adenylate cyclase (cAMP), the MAPK cascade as well as the cAMP-dependent protein kinase A pathway leading to steroidogenic factor 1/NR5A1-mediated transcriptional activation. This chain is Adrenocorticotropic hormone receptor (MC2R), found in Mesocricetus auratus (Golden hamster).